The sequence spans 259 residues: uncharacterized protein (259 aa).

An N-acetyltransferase domain is found at glutamine 110–threonine 259.

In terms of biological role, may be involved in maturation of the outermost layer of the spore. This is an uncharacterized protein from Bacillus subtilis (strain 168).